We begin with the raw amino-acid sequence, 398 residues long: DNA replication and repair protein RecF (398 aa).

30 to 37 (GSNGLGKT) contributes to the ATP binding site.

This sequence belongs to the RecF family.

The protein localises to the cytoplasm. Functionally, the RecF protein is involved in DNA metabolism; it is required for DNA replication and normal SOS inducibility. RecF binds preferentially to single-stranded, linear DNA. It also seems to bind ATP. In Renibacterium salmoninarum (strain ATCC 33209 / DSM 20767 / JCM 11484 / NBRC 15589 / NCIMB 2235), this protein is DNA replication and repair protein RecF.